The chain runs to 266 residues: Indole-3-glycerol phosphate synthase (266 aa).

Belongs to the TrpC family.

It carries out the reaction 1-(2-carboxyphenylamino)-1-deoxy-D-ribulose 5-phosphate + H(+) = (1S,2R)-1-C-(indol-3-yl)glycerol 3-phosphate + CO2 + H2O. It participates in amino-acid biosynthesis; L-tryptophan biosynthesis; L-tryptophan from chorismate: step 4/5. The polypeptide is Indole-3-glycerol phosphate synthase (Variovorax paradoxus (strain S110)).